The primary structure comprises 259 residues: Ribosomal RNA small subunit methyltransferase A (259 aa).

The S-adenosyl-L-methionine site is built by Asn13, Leu15, Gly39, Glu60, Asp84, and Asn101.

It belongs to the class I-like SAM-binding methyltransferase superfamily. rRNA adenine N(6)-methyltransferase family. RsmA subfamily.

It localises to the cytoplasm. The enzyme catalyses adenosine(1518)/adenosine(1519) in 16S rRNA + 4 S-adenosyl-L-methionine = N(6)-dimethyladenosine(1518)/N(6)-dimethyladenosine(1519) in 16S rRNA + 4 S-adenosyl-L-homocysteine + 4 H(+). Specifically dimethylates two adjacent adenosines (A1518 and A1519) in the loop of a conserved hairpin near the 3'-end of 16S rRNA in the 30S particle. May play a critical role in biogenesis of 30S subunits. The polypeptide is Ribosomal RNA small subunit methyltransferase A (Mesomycoplasma hyopneumoniae (strain J / ATCC 25934 / NCTC 10110) (Mycoplasma hyopneumoniae)).